Here is a 450-residue protein sequence, read N- to C-terminus: Beclin-1 (450 aa).

Met1 carries the post-translational modification N-acetylmethionine. Residues Ser15 and Ser30 each carry the phosphoserine modification. A disordered region spans residues 48-72 (TTAQAKPGETQEEETNSGEEPFIET). Phosphoserine; by AMPK is present on residues Ser90, Ser93, and Ser96. Positions 108-127 (TMENLSRRLKVTGDLFDIMS) match the BH3 motif. Residues 112 to 159 (LSRRLKVTGDLFDIMSGQTDVDHPLCEECTDTLLDQLDTQLNVTENEC) form an interaction with BCL2 and BCL2L1 isoform Bcl-X(L) region. Thr119 is modified (phosphothreonine; by DAPK1). A coiled-coil region spans residues 142–270 (DTLLDQLDTQ…LDKLKKTNVF (129 aa)). Residues 245–450 (DELKSVENQM…AWVSSQFYNK (206 aa)) form an evolutionary conserved domain (ECD) region. Glycyl lysine isopeptide (Lys-Gly) (interchain with G-Cter in ubiquitin) cross-links involve residues Lys402 and Lys437. The interval 425 to 450 (WTKALKFMLTNLKWGLAWVSSQFYNK) is required for membrane-association.

This sequence belongs to the beclin family. As to quaternary structure, a homodimeric form is proposed to exist; this metastable form readily transits to ATG14- or UVRAG-containing complexes with BECN1:UVRAG being more stable than BECN1:ATG14. Component of the PI3K (PI3KC3/PI3K-III/class III phosphatidylinositol 3-kinase) complex the core of which is composed of the catalytic subunit PIK3C3, the regulatory subunit PIK3R4 and BECN1 associating with additional regulatory/auxiliary subunits to form alternative complex forms. Alternative complex forms containing a fourth regulatory subunit in a mutually exclusive manner are PI3K complex I (PI3KC3-C1) containing ATG14, and PI3K complex II (PI3KC3-C2) containing UVRAG. PI3KC3-C1 displays a V-shaped architecture with PIK3R4 serving as a bridge between PIK3C3 and the ATG14:BECN1 subcomplex. Both, PI3KC3-C1 and PI3KC3-C2, can associate with further regulatory subunits, such as RUBCN, SH3GLB1/Bif-1 and AMBRA1. PI3KC3-C1 probably associates with PIK3CB. Forms a complex with PPP2CA and AMBRA1; AMBRA1 and BECN1 components of the complex regulate MYC stability via different pathways. Component of the complex, at least composed of LRPPRC, BECN1 and BCL2; the interactions prevent BECN1 from forming an autophagy-inducing complex with PIK3C3. Interacts with AMBRA1, GOPC, GRID2. Interacts with BCL2 and BCL2L1 isoform Bcl-X(L); the interaction inhibits BECN1 function in promoting autophagy by interfering with the formation of the PI3K complex. Interacts with cytosolic HMGB1; inhibits the interaction of BECN1 and BCL2 leading to promotion of autophagy. Interacts with USP10, USP13, VMP1, DAPK1, RAB39A. Interacts with the poly-Gln domain of ATXN3; the interaction causes deubiquitination at Lys-402 and stabilizes BECN1. Interacts with SLAMF1. Interacts with TRIM5; the interaction causes activation of BECN1 by causing its dissociation from its inhibitors BCL2 and TAB2. Interacts with active ULK1 (phosphorylated on 'Ser-317') and MEFV simultaneously. Interacts with WDR81 and WDR91; negatively regulates the PI3 kinase/PI3K activity associated with endosomal membranes. Interacts with LAPTM4B; competes with EGFR for LAPTM4B binding; regulates EGFR activity. Interacts with TRIM50. Interacts with TRIM16. Interacts with ATG14; this interaction is increased in the absence of TMEM39A. Interacts with WASHC1; preventing interaction with AMBRA1 and the DCX(AMBRA1) complex and subsequent ubiquitination. Interacts with TRIM17. Interacts with BCL2L10/BCL-B (via BH1 domain). Interacts with SH3BGRL. Interacts with IRGM; enhancing BECN1-interacting partners and influencing the composition of the BECN1 complex. Interacts with ARMC3. Interacts with LRPPRC. In terms of assembly, (Microbial infection) Interacts with human cytomegalovirus/HHV-5 protein TRS1. (Microbial infection) Interacts with murine gammaherpesvirus 68 M11. As to quaternary structure, (Microbial infection) Interacts with herpes simplex virus 1 (HHV-1) protein ICP34.5; this interaction antagonizes the host autophagy response. In terms of assembly, (Microbial infection) Interacts with Epstein-Barr virus protein BHRF1; this interaction inhibits BECN1-mediated autophagy induction. Post-translationally, phosphorylation at Thr-119 by DAPK1 reduces its interaction with BCL2 and BCL2L1 and promotes induction of autophagy. In response to autophagic stimuli, phosphorylated at serine residues by AMPK in an ATG14-dependent manner, and this phosphorylation is critical for maximally efficient autophagy. Polyubiquitinated by NEDD4, both with 'Lys-11'- and 'Lys-63'-linkages. 'Lys-11'-linked polyubiquitination leads to degradation and is enhanced when the stabilizing interaction partner VPS34 is depleted. Deubiquitinated by USP10 and USP13, leading to stabilize the PIK3C3/VPS34-containing complexes. Polyubiquitinated at Lys-402 with 'Lys-48'-linkages. 'Lys-48'-linked polyubiquitination of Lys-402 leads to degradation. Deubiquitinated by ATXN3, leading to stabilization. Ubiquitinated at Lys-437 via 'Lys-63'-linkage by the DCX(AMBRA1) complex, thereby increasing the association between BECN1 and PIK3C3 to promote PIK3C3 activity. 'Lys-48'-linked ubiquitination by RNF216 leads to proteasomal degradation and autophagy inhibition. In terms of processing, proteolytically processed by caspases including CASP8 and CASP3; the C-terminal fragments lack autophagy-inducing capacity and are proposed to induce apoptosis. Thus the cleavage is proposed to be an determinant to switch from autophagy to apoptosis pathways affecting cellular homeostasis including viral infections and survival of tumor cells. Ubiquitous.

Its subcellular location is the cytoplasm. It localises to the golgi apparatus. It is found in the trans-Golgi network membrane. The protein resides in the endosome membrane. The protein localises to the endoplasmic reticulum membrane. Its subcellular location is the mitochondrion membrane. It localises to the endosome. It is found in the cytoplasmic vesicle. The protein resides in the autophagosome. The protein localises to the mitochondrion. Its subcellular location is the nucleus. Its function is as follows. Plays a central role in autophagy. Acts as a core subunit of the PI3K complex that mediates formation of phosphatidylinositol 3-phosphate; different complex forms are believed to play a role in multiple membrane trafficking pathways: PI3KC3-C1 is involved in initiation of autophagosomes and PI3KC3-C2 in maturation of autophagosomes and endocytosis. Involved in regulation of degradative endocytic trafficking and required for the abscission step in cytokinesis, probably in the context of PI3KC3-C2. Essential for the formation of PI3KC3-C2 but not PI3KC3-C1 PI3K complex forms. Involved in endocytosis. May play a role in antiviral host defense. Beclin-1-C 35 kDa localized to mitochondria can promote apoptosis; it induces the mitochondrial translocation of BAX and the release of proapoptotic factors. In terms of biological role, (Microbial infection) Protects against infection by a neurovirulent strain of Sindbis virus. This Homo sapiens (Human) protein is Beclin-1 (BECN1).